We begin with the raw amino-acid sequence, 1054 residues long: Cell wall acid trehalase ARB_03719 (1054 aa).

The signal sequence occupies residues 1 to 24 (MKQPNINLAACILWLLSIITAVAA). N-linked (GlcNAc...) asparagine glycans are attached at residues Asn138, Asn178, Asn183, Asn207, Asn239, Asn277, and Asn309. Residue 450–451 (WD) participates in substrate binding. Asn495, Asn515, Asn572, and Asn580 each carry an N-linked (GlcNAc...) asparagine glycan. Glu586 (proton donor) is an active-site residue. N-linked (GlcNAc...) asparagine glycosylation is found at Asn620 and Asn648. Residue 654–655 (KQ) participates in substrate binding. Asn808 and Asn844 each carry an N-linked (GlcNAc...) asparagine glycan. A disordered region spans residues 950 to 974 (PLHPVTDPENGDASGSSPTTPASSV). Positions 962–974 (ASGSSPTTPASSV) are enriched in low complexity. Asn1004, Asn1007, and Asn1039 each carry an N-linked (GlcNAc...) asparagine glycan.

The protein belongs to the glycosyl hydrolase 65 family.

It localises to the secreted. The protein localises to the cell wall. The catalysed reaction is alpha,alpha-trehalose + H2O = alpha-D-glucose + beta-D-glucose. Its function is as follows. Cell wall acid trehalase that catalyzes hydrolysis of the disaccharide trehalose and required for growth on trehalose as carbon source. Plays a role in virulence. This chain is Cell wall acid trehalase ARB_03719, found in Arthroderma benhamiae (strain ATCC MYA-4681 / CBS 112371) (Trichophyton mentagrophytes).